A 267-amino-acid chain; its full sequence is Lyso-ornithine lipid O-acyltransferase (267 aa).

Residues 7–27 form a helical membrane-spanning segment; it reads IFLVVAAMVALSLSLIPFQYL.

The protein belongs to the 1-acyl-sn-glycerol-3-phosphate acyltransferase family. OlsA subfamily.

It is found in the membrane. It carries out the reaction a lyso-ornithine lipid + a fatty acyl-[ACP] = an N(2)-[(3R)-3-(acyloxy)acyl]-L-ornithine lipid + holo-[ACP]. It functions in the pathway lipid metabolism. Its function is as follows. Catalyzes the second step in the formation of ornithine lipids, which are phosphorus-free membrane lipids. Uses acyl-acyl carrier protein (acyl-AcpP) as an acyl donor and converts lyso-ornithine lipid (LOL) into ornithine lipid (OL). The protein is Lyso-ornithine lipid O-acyltransferase of Brucella abortus (strain 2308).